The sequence spans 142 residues: Acidic phospholipase A2 PA4 (142 aa).

Trp-10, Gly-12, and Gly-14 together coordinate Ca(2+). Cystine bridges form between Cys-11–Cys-33, Cys-32–Cys-72, and Cys-39–Cys-65. His-36 is a catalytic residue. Ca(2+) is bound at residue Asp-37.

Belongs to the phospholipase A2 family. Group III subfamily. Requires Ca(2+) as cofactor. In terms of tissue distribution, expressed by the venom gland.

It is found in the secreted. It carries out the reaction a 1,2-diacyl-sn-glycero-3-phosphocholine + H2O = a 1-acyl-sn-glycero-3-phosphocholine + a fatty acid + H(+). PLA2 catalyzes the calcium-dependent hydrolysis of the 2-acyl groups in 3-sn-phosphoglycerides. The sequence is that of Acidic phospholipase A2 PA4 from Heloderma suspectum (Gila monster).